We begin with the raw amino-acid sequence, 357 residues long: Peptide chain release factor 1 (357 aa).

Q233 is modified (N5-methylglutamine).

Belongs to the prokaryotic/mitochondrial release factor family. In terms of processing, methylated by PrmC. Methylation increases the termination efficiency of RF1.

It is found in the cytoplasm. Functionally, peptide chain release factor 1 directs the termination of translation in response to the peptide chain termination codons UAG and UAA. The polypeptide is Peptide chain release factor 1 (Enterococcus faecalis (strain ATCC 700802 / V583)).